Here is a 421-residue protein sequence, read N- to C-terminus: MAAISRAIKQELLEDLKPEMYLPPKSTRRRAKVKTEEKVDVKTLVKSKSKKRRAAKNELEENVEFVRRFAPRRPYQWRGRQVRALPRPGIPVVFTPGQRSGVASKRSYDEVYADEDVLDQSGNMINEFAYGKRVKMLTHKNPTPSQVPITPQEPIARPGEARLLPTVQVLAPRDSKHETMLPVTKSEGGDVKVENKGFEQITPQLGVQTVDIKVPVKRKSEVEDEILKRAKMEPFETTVKMEYSEQPQVEVFDTGVEPSSFFEVRSQARPIAVARKRRVPTVEVMEVQQSDHTAPTASAAPVANVIVGPHLSRRPSRWGPANAIYPDYVYHPSISAKKIMGPRPTGRVSRWGPANSIFPEVRLHPSMVSAVTRAAPRKSTKSRRRRRVRTRRAFVLPAGTKTGVMLPQNIRYHPSILFRRA.

This sequence belongs to the adenoviridae core-capsid bridging protein family. As to quaternary structure, monomer. Homodimer. Exists in equilibrium between monomers and dimers in solution. Interacts with the histone-like nucleoprotein; this interactions bridge the virus core to the capsid. Interacts with core protein X; this interactions bridge the virus core to the capsid. Interacts with the endosome lysis protein VI; this interactions bridge the virus core to the capsid. Interacts with the peripentonal hexons. Interacts with host NPM1; this interaction might play a role in virus assembly.

Its subcellular location is the virion. The protein resides in the host nucleus. It is found in the host nucleolus. Its function is as follows. Associates loosely with the viral DNA to form an outer shell around the nucleoprotein-DNA complex and links it with the capsid by binding the endosome lysis protein. Dissociates from the viral genome during entry. Might be involved in nuclear capsid assembly of the viral particles through its association with NPM1/nucleophosmin. This chain is Core-capsid bridging protein, found in Canine adenovirus serotype 1 (strain RI261) (CAdV-1).